The sequence spans 472 residues: Uronate isomerase (472 aa).

The protein belongs to the metallo-dependent hydrolases superfamily. Uronate isomerase family.

The enzyme catalyses D-glucuronate = D-fructuronate. It carries out the reaction aldehydo-D-galacturonate = keto-D-tagaturonate. It functions in the pathway carbohydrate metabolism; pentose and glucuronate interconversion. The sequence is that of Uronate isomerase from Xanthomonas euvesicatoria pv. vesicatoria (strain 85-10) (Xanthomonas campestris pv. vesicatoria).